Consider the following 643-residue polypeptide: Extracellular metalloproteinase 4 (643 aa).

The N-terminal stretch at 1 to 18 is a signal peptide; it reads MHGLLLAGLLALPLNVLA. Positions 19-254 are excised as a propeptide; that stretch reads HPTESHSSGI…VHSVVDYVSA (236 aa). Residues 47–57 are compositionally biased toward basic and acidic residues; sequence TKSDAVPKQDD. The disordered stretch occupies residues 47–71; that stretch reads TKSDAVPKQDDESFTTSSTGDDNVS. Residues 60-71 are compositionally biased toward polar residues; the sequence is FTTSSTGDDNVS. N-linked (GlcNAc...) asparagine glycans are attached at residues Asn271 and Asn420. His437 contributes to the Zn(2+) binding site. Residue Glu438 is part of the active site. His441 provides a ligand contact to Zn(2+). N-linked (GlcNAc...) asparagine glycans are attached at residues Asn510 and Asn553.

It belongs to the peptidase M36 family. Requires Zn(2+) as cofactor.

It is found in the secreted. In terms of biological role, secreted metalloproteinase probably acting as a virulence factor. The polypeptide is Extracellular metalloproteinase 4 (MEP4) (Arthroderma benhamiae (Trichophyton mentagrophytes)).